Consider the following 89-residue polypeptide: Small ribosomal subunit protein uS14A (89 aa).

Residues alanine 29–methionine 62 are disordered. Residues arginine 49–proline 58 show a composition bias toward basic and acidic residues.

It belongs to the universal ribosomal protein uS14 family. As to quaternary structure, part of the 30S ribosomal subunit. Contacts proteins S3 and S10.

Its function is as follows. Binds 16S rRNA, required for the assembly of 30S particles and may also be responsible for determining the conformation of the 16S rRNA at the A site. The protein is Small ribosomal subunit protein uS14A of Enterococcus faecalis (strain ATCC 700802 / V583).